Consider the following 431-residue polypeptide: MQMTTRVLTGITPSGTPHLGNYVGAIRPAIQASTATDAESFYFLADLHSLIKAQDPARTQRSTLEIAASWLACGLDPDKVWFYRQSDVPETTELMWLLTCVAGKGILNRAHAYKAAMDKNRAEGEDEDAGVTAGLFMYPVLMAADILIFNAHKVPVGRDQIQHIEMARDFAQRFNHVYGQDYFTLPDAVIDEQVATLPGLDGRKMSKSYNNTIPLFAPREELRKLVFSILTDSRAPGEAKDTQGSALFQLYQAFATPQETAAFAQAFADGISWADAKQQLFERIDLEIAPLRARYEALMAEPAKIEATLRAGGARLRARYATPLLAQLRDAVGLRDLSSQASAVGPATAVKAALPVFKQYRESDGQFYFKLHDAAGTLLLQSDGFASPREAGQLIARLKQAEDTTQLQLPGVQLPADAAPVLAALRALREA.

Residues 12-14 and 20-21 each bind ATP; these read TPS and GN. The 'HIGH' region signature appears at 13–21; the sequence is PSGTPHLGN. D145 is a binding site for L-tryptophan. ATP-binding positions include 157–159, L197, and 204–208; these read GRD and KMSKS. The short motif at 204 to 208 is the 'KMSKS' region element; sequence KMSKS.

Belongs to the class-I aminoacyl-tRNA synthetase family. Homodimer.

Its subcellular location is the cytoplasm. It carries out the reaction tRNA(Trp) + L-tryptophan + ATP = L-tryptophyl-tRNA(Trp) + AMP + diphosphate + H(+). Catalyzes the attachment of tryptophan to tRNA(Trp). The sequence is that of Tryptophan--tRNA ligase from Xanthomonas campestris pv. campestris (strain ATCC 33913 / DSM 3586 / NCPPB 528 / LMG 568 / P 25).